The sequence spans 352 residues: 4-hydroxy-3-methylbut-2-en-1-yl diphosphate synthase (flavodoxin) (352 aa).

Residues cysteine 262, cysteine 265, cysteine 297, and glutamate 304 each contribute to the [4Fe-4S] cluster site.

It belongs to the IspG family. [4Fe-4S] cluster serves as cofactor.

The catalysed reaction is (2E)-4-hydroxy-3-methylbut-2-enyl diphosphate + oxidized [flavodoxin] + H2O + 2 H(+) = 2-C-methyl-D-erythritol 2,4-cyclic diphosphate + reduced [flavodoxin]. The protein operates within isoprenoid biosynthesis; isopentenyl diphosphate biosynthesis via DXP pathway; isopentenyl diphosphate from 1-deoxy-D-xylulose 5-phosphate: step 5/6. In terms of biological role, converts 2C-methyl-D-erythritol 2,4-cyclodiphosphate (ME-2,4cPP) into 1-hydroxy-2-methyl-2-(E)-butenyl 4-diphosphate. This is 4-hydroxy-3-methylbut-2-en-1-yl diphosphate synthase (flavodoxin) from Campylobacter curvus (strain 525.92).